Here is a 261-residue protein sequence, read N- to C-terminus: Putative outer membrane protein CT_371 (261 aa).

Residues 1 to 18 form the signal peptide; sequence MRLCFILFLLLSPLISEA.

The protein localises to the cell outer membrane. The polypeptide is Putative outer membrane protein CT_371 (Chlamydia trachomatis serovar D (strain ATCC VR-885 / DSM 19411 / UW-3/Cx)).